Here is a 504-residue protein sequence, read N- to C-terminus: Anaerobic nitric oxide reductase transcription regulator NorR (504 aa).

Aspartate 57 bears the 4-aspartylphosphate mark. One can recognise a Sigma-54 factor interaction domain in the interval 187–416 (MIGLSPGMTQ…LEHAIHRAVV (230 aa)). Residues 215 to 222 (GETGTGKE) and 278 to 287 (ADNGTLFLDE) contribute to the ATP site. The H-T-H motif DNA-binding region spans 479–498 (WAACARMLETDVANLHRLAK).

Its pathway is nitrogen metabolism; nitric oxide reduction. In terms of biological role, required for the expression of anaerobic nitric oxide (NO) reductase, acts as a transcriptional activator for at least the norVW operon. Activation also requires sigma-54. In Escherichia coli (strain K12 / MC4100 / BW2952), this protein is Anaerobic nitric oxide reductase transcription regulator NorR.